Reading from the N-terminus, the 198-residue chain is Putative nitroreductase MJ1384 (198 aa).

This sequence belongs to the nitroreductase family. It depends on FMN as a cofactor.

The chain is Putative nitroreductase MJ1384 from Methanocaldococcus jannaschii (strain ATCC 43067 / DSM 2661 / JAL-1 / JCM 10045 / NBRC 100440) (Methanococcus jannaschii).